A 694-amino-acid chain; its full sequence is Polyribonucleotide nucleotidyltransferase (694 aa).

Mg(2+) is bound by residues aspartate 485 and aspartate 491. Residues 552–611 enclose the KH domain; sequence PRIETMQIKPNKIATVIGPGGKQIRQIIEEAGVQIDINDSGLVSISASSPQAIEKAKSII. The S1 motif domain maps to 621–689; that stretch reads GKIYEGRVTS…EKGQYKLSHK (69 aa).

Belongs to the polyribonucleotide nucleotidyltransferase family. Mg(2+) serves as cofactor.

It is found in the cytoplasm. The catalysed reaction is RNA(n+1) + phosphate = RNA(n) + a ribonucleoside 5'-diphosphate. Involved in mRNA degradation. Catalyzes the phosphorolysis of single-stranded polyribonucleotides processively in the 3'- to 5'-direction. The sequence is that of Polyribonucleotide nucleotidyltransferase from Chlamydia felis (strain Fe/C-56) (Chlamydophila felis).